The sequence spans 131 residues: MTRSKIRENVFKMLFRVEFHDKSELAEQMELLNDELTNPTDEERQYIDEKCSAIIEHMAELDALIDEKSTGWKTNRMAKVDLAIIRLAVYEIKFEDDIPTKVSINEAVELAKKYGADESGAFVNGVLAKFA.

The protein belongs to the NusB family.

Functionally, involved in transcription antitermination. Required for transcription of ribosomal RNA (rRNA) genes. Binds specifically to the boxA antiterminator sequence of the ribosomal RNA (rrn) operons. This Agathobacter rectalis (strain ATCC 33656 / DSM 3377 / JCM 17463 / KCTC 5835 / VPI 0990) (Eubacterium rectale) protein is Transcription antitermination protein NusB.